The primary structure comprises 437 residues: Enolase 2 (437 aa).

H160 and E169 together coordinate substrate. E212 serves as the catalytic Proton donor. Mg(2+) contacts are provided by D247, E296, and D321. Substrate-binding residues include E296 and D321. K346 acts as the Proton acceptor in catalysis. Residues 373–376 (SHRS) and K397 contribute to the substrate site.

The protein belongs to the enolase family. As to quaternary structure, homodimer. It depends on Mg(2+) as a cofactor.

The protein localises to the cytoplasm. It carries out the reaction (2R)-2-phosphoglycerate = phosphoenolpyruvate + H2O. Its pathway is carbohydrate degradation; glycolysis; pyruvate from D-glyceraldehyde 3-phosphate: step 4/5. This is Enolase 2 (ENO2) from Candida glabrata (strain ATCC 2001 / BCRC 20586 / JCM 3761 / NBRC 0622 / NRRL Y-65 / CBS 138) (Yeast).